Consider the following 517-residue polypeptide: 2-isopropylmalate synthase (517 aa).

Residues 5–267 (VIIFDTTLRD…HTNVRCQEIY (263 aa)) form the Pyruvate carboxyltransferase domain. Residues aspartate 14, histidine 202, histidine 204, and asparagine 238 each contribute to the Mn(2+) site. The segment at 392-517 (RLKCFHVDSS…QRKYIKKNNN (126 aa)) is regulatory domain.

This sequence belongs to the alpha-IPM synthase/homocitrate synthase family. LeuA type 1 subfamily. In terms of assembly, homodimer. The cofactor is Mn(2+).

It localises to the cytoplasm. It carries out the reaction 3-methyl-2-oxobutanoate + acetyl-CoA + H2O = (2S)-2-isopropylmalate + CoA + H(+). Its pathway is amino-acid biosynthesis; L-leucine biosynthesis; L-leucine from 3-methyl-2-oxobutanoate: step 1/4. Its function is as follows. Catalyzes the condensation of the acetyl group of acetyl-CoA with 3-methyl-2-oxobutanoate (2-ketoisovalerate) to form 3-carboxy-3-hydroxy-4-methylpentanoate (2-isopropylmalate). The polypeptide is 2-isopropylmalate synthase (Blochmanniella pennsylvanica (strain BPEN)).